We begin with the raw amino-acid sequence, 415 residues long: Serine--tRNA ligase (415 aa).

231-233 (TAE) is an L-serine binding site. 262–264 (RSE) contacts ATP. L-serine is bound at residue E285. 349–352 (EISS) serves as a coordination point for ATP. Residue S383 coordinates L-serine.

Belongs to the class-II aminoacyl-tRNA synthetase family. Type-1 seryl-tRNA synthetase subfamily. As to quaternary structure, homodimer. The tRNA molecule binds across the dimer.

It localises to the cytoplasm. The enzyme catalyses tRNA(Ser) + L-serine + ATP = L-seryl-tRNA(Ser) + AMP + diphosphate + H(+). It carries out the reaction tRNA(Sec) + L-serine + ATP = L-seryl-tRNA(Sec) + AMP + diphosphate + H(+). Its pathway is aminoacyl-tRNA biosynthesis; selenocysteinyl-tRNA(Sec) biosynthesis; L-seryl-tRNA(Sec) from L-serine and tRNA(Sec): step 1/1. Its function is as follows. Catalyzes the attachment of serine to tRNA(Ser). Is also able to aminoacylate tRNA(Sec) with serine, to form the misacylated tRNA L-seryl-tRNA(Sec), which will be further converted into selenocysteinyl-tRNA(Sec). The protein is Serine--tRNA ligase of Helicobacter pylori (strain HPAG1).